The chain runs to 676 residues: Period circadian protein (676 aa).

A compositionally biased stretch (low complexity) spans 1-34 (KVSDSAYSNSCSNSQSQRSGSSKSRLSGSHSSGS). A disordered region spans residues 1 to 161 (KVSDSAYSNS…AAQSFPIPSP (161 aa)). The short motif at 53–66 (KRNKDKSRKKKKNK) is the Nuclear localization signal element. A compositionally biased stretch (basic residues) spans 53–66 (KRNKDKSRKKKKNK). Basic and acidic residues predominate over residues 108-120 (ELQDQQHGEDHSE). 2 PAS domains span residues 224-359 (DSFC…ATPI) and 377-483 (FAIR…RVFQ). A disordered region spans residues 583-676 (TNTSIAGTGG…VTLTESLLNK (94 aa)). Repeat copies occupy residues 589-590 (GT), 592-593 (GT), 594-595 (GT), 596-597 (GT), 598-599 (GT), 600-601 (GT), 602-603 (GT), 604-605 (GT), 606-607 (GT), 608-609 (GT), 610-611 (GT), 612-613 (GT), 614-615 (GT), 616-617 (GT), 618-619 (GT), 620-621 (GT), 622-623 (GT), 624-625 (GT), 626-627 (GT), 628-629 (GT), 630-631 (GT), 632-633 (GT), 634-635 (GT), 636-637 (GT), 638-639 (GT), and 640-641 (GT). The segment covering 589–643 (GTGGTGTGTGTGTGTGTGTGTGTGTGTGTGTGTGTGTGTGTGTGTGTGTGTGTGN) has biased composition (gly residues). The interval 589-645 (GTGGTGTGTGTGTGTGTGTGTGTGTGTGTGTGTGTGTGTGTGTGTGTGTGTGTGNGT) is 28 X 2 AA approximate tandem repeats of G-T. The 27; approximate repeat unit spans residues 642 to 643 (GN). Repeat 28 spans residues 644-645 (GT). Low complexity predominate over residues 644–654 (GTNSCTGTGTT).

As to quaternary structure, forms a heterodimer with timeless (TIM); the complex then translocates into the nucleus. In terms of processing, phosphorylated with a circadian rhythmicity, probably by the double-time protein (dbt). Phosphorylation could be implicated in the stability of per monomer and in the formation of heterodimer per-tim.

It localises to the nucleus. Its subcellular location is the cytoplasm. The protein localises to the perinuclear region. Functionally, essential for biological clock functions. Determines the period length of circadian and ultradian rhythms; an increase in PER dosage leads to shortened circadian rhythms and a decrease leads to lengthened circadian rhythms. Essential for the circadian rhythmicity of locomotor activity, eclosion behavior, and for the rhythmic component of the male courtship song that originates in the thoracic nervous system. The biological cycle depends on the rhythmic formation and nuclear localization of the TIM-PER complex. Light induces the degradation of TIM, which promotes elimination of PER. Nuclear activity of the heterodimer coordinatively regulates PER and TIM transcription through a negative feedback loop. Behaves as a negative element in circadian transcriptional loop. Does not appear to bind DNA, suggesting indirect transcriptional inhibition. This chain is Period circadian protein (per), found in Drosophila mauritiana (Fruit fly).